A 179-amino-acid polypeptide reads, in one-letter code: UPF0303 protein YBR137W (179 aa).

It belongs to the UPF0303 family.

The protein resides in the cytoplasm. The chain is UPF0303 protein YBR137W from Saccharomyces cerevisiae (strain ATCC 204508 / S288c) (Baker's yeast).